Here is a 595-residue protein sequence, read N- to C-terminus: MHRYRSHTCAALRKSDVGSTVRLSGWVHRVRDHGGVLFIDLRDHYGMTQVVADPDSPAFKMAETVRGEWVIRIDGTVKARTDDTVNKNMPTGEIELYAREIEVLSAAKELPLPVFGEPDYPEDVRLKYRFLDLRRETLHRNIVKRTEVISAMRRGMSDIGFTEYTTPILTASSPEGARDFLVPSRIHPGTFYALPQAPQQYKQLLMVAGFDRYFQIAPCFRDEDPRADRLPGEFYQLDLEMSFVEQEDVWDTMEPMIRAIFADFADGKPVTDKFPRIPYDTAIRKYGSDKPDLRNPIEMQEVTQHFAGSGFKVFANMIATNPKVEIWAIPAKTGGSRAFCDRMNAWAQSQGQPGLGYIFWRKEGEKLEGAGPLAKNIGEERTDAIRTQLGLEDGDACFFVAGEPAKFYKFAGEARTRAGEELNLVDRDRFELCWIVDFPFYEWNEDEKRVDFAHNPFSMPQGGLKALSGDDLLSIKAFQYDMVCNGFEIASGSIRNQSPELMVKAFENVGLSQADVEEQFGGLYRAFQYGAPPHGGMAFGIDRIVMLIVGAKNLREISLFPMNQQAVDLLMGAPSPATPAQLRELAIRPIPQKKD.

E175 contacts L-aspartate. The segment at Q199–K202 is aspartate. Residues R221 and H454 each contribute to the L-aspartate site. R221 to E223 serves as a coordination point for ATP. ATP is bound at residue E488. Residue R495 participates in L-aspartate binding. G540–R543 provides a ligand contact to ATP.

Belongs to the class-II aminoacyl-tRNA synthetase family. Type 1 subfamily. In terms of assembly, homodimer.

It localises to the cytoplasm. It carries out the reaction tRNA(Asx) + L-aspartate + ATP = L-aspartyl-tRNA(Asx) + AMP + diphosphate. Its function is as follows. Aspartyl-tRNA synthetase with relaxed tRNA specificity since it is able to aspartylate not only its cognate tRNA(Asp) but also tRNA(Asn). Reaction proceeds in two steps: L-aspartate is first activated by ATP to form Asp-AMP and then transferred to the acceptor end of tRNA(Asp/Asn). This Sinorhizobium fredii (strain NBRC 101917 / NGR234) protein is Aspartate--tRNA(Asp/Asn) ligase.